The sequence spans 393 residues: Protein phosphatase 2C homolog 4 (393 aa).

Residues 33-368 (YNCVGSMQGY…DNMTAIIVVL (336 aa)) enclose the PPM-type phosphatase domain. Residues D83, G84, D310, and D359 each coordinate Mn(2+).

It belongs to the PP2C family. Mg(2+) is required as a cofactor. The cofactor is Mn(2+).

The catalysed reaction is O-phospho-L-seryl-[protein] + H2O = L-seryl-[protein] + phosphate. The enzyme catalyses O-phospho-L-threonyl-[protein] + H2O = L-threonyl-[protein] + phosphate. The chain is Protein phosphatase 2C homolog 4 (PTC4) from Saccharomyces cerevisiae (strain ATCC 204508 / S288c) (Baker's yeast).